We begin with the raw amino-acid sequence, 385 residues long: S-adenosylmethionine synthase (385 aa).

His-15 contributes to the ATP binding site. Asp-17 contributes to the Mg(2+) binding site. Glu-43 serves as a coordination point for K(+). L-methionine is bound by residues Glu-56 and Gln-99. Residues 99–109 are flexible loop; the sequence is QSPDINKGINN. Residues 164 to 166, 230 to 231, Asp-239, 245 to 246, Ala-262, and Lys-266 contribute to the ATP site; these read DAK, RF, and RK. Asp-239 lines the L-methionine pocket. An L-methionine-binding site is contributed by Lys-270.

Belongs to the AdoMet synthase family. Homotetramer; dimer of dimers. Requires Mg(2+) as cofactor. The cofactor is K(+).

It localises to the cytoplasm. It carries out the reaction L-methionine + ATP + H2O = S-adenosyl-L-methionine + phosphate + diphosphate. The protein operates within amino-acid biosynthesis; S-adenosyl-L-methionine biosynthesis; S-adenosyl-L-methionine from L-methionine: step 1/1. Catalyzes the formation of S-adenosylmethionine (AdoMet) from methionine and ATP. The overall synthetic reaction is composed of two sequential steps, AdoMet formation and the subsequent tripolyphosphate hydrolysis which occurs prior to release of AdoMet from the enzyme. The polypeptide is S-adenosylmethionine synthase (Baumannia cicadellinicola subsp. Homalodisca coagulata).